Here is a 345-residue protein sequence, read N- to C-terminus: S-adenosylmethionine:tRNA ribosyltransferase-isomerase (345 aa).

This sequence belongs to the QueA family. Monomer.

It localises to the cytoplasm. It catalyses the reaction 7-aminomethyl-7-carbaguanosine(34) in tRNA + S-adenosyl-L-methionine = epoxyqueuosine(34) in tRNA + adenine + L-methionine + 2 H(+). It participates in tRNA modification; tRNA-queuosine biosynthesis. Transfers and isomerizes the ribose moiety from AdoMet to the 7-aminomethyl group of 7-deazaguanine (preQ1-tRNA) to give epoxyqueuosine (oQ-tRNA). The polypeptide is S-adenosylmethionine:tRNA ribosyltransferase-isomerase (Shewanella sp. (strain MR-4)).